The following is a 319-amino-acid chain: Ribosomal RNA small subunit methyltransferase H (319 aa).

S-adenosyl-L-methionine contacts are provided by residues 37–39, D56, L90, D104, and Q111; that span reads GGH.

It belongs to the methyltransferase superfamily. RsmH family.

It localises to the cytoplasm. The enzyme catalyses cytidine(1402) in 16S rRNA + S-adenosyl-L-methionine = N(4)-methylcytidine(1402) in 16S rRNA + S-adenosyl-L-homocysteine + H(+). Its function is as follows. Specifically methylates the N4 position of cytidine in position 1402 (C1402) of 16S rRNA. In Nocardioides sp. (strain ATCC BAA-499 / JS614), this protein is Ribosomal RNA small subunit methyltransferase H.